The chain runs to 303 residues: Probable cell division protein WhiA (303 aa).

Residues 272 to 303 constitute a DNA-binding region (H-T-H motif); that stretch reads SIQQLADSLSTPLTKSGVNHRLRKINKIADEL.

Belongs to the WhiA family.

Its function is as follows. Involved in cell division and chromosome segregation. The polypeptide is Probable cell division protein WhiA (Streptococcus pneumoniae (strain ATCC 700669 / Spain 23F-1)).